Reading from the N-terminus, the 1154-residue chain is Voltage-dependent calcium channel subunit alpha-2/delta-2 (1154 aa).

Positions 1–18 (MAVPARTCGASWPGPVRT) are cleaved as a signal peptide. The disordered stretch occupies residues 1–37 (MAVPARTCGASWPGPVRTARPWPGRGPRPCPDPRGPA). At 19 to 1116 (ARPWPGRGPR…TEDTSDCGRG (1098 aa)) the chain is on the extracellular side. Positions 24–34 (GRGPRPCPDPR) are enriched in pro residues. A glycan (N-linked (GlcNAc...) asparagine) is linked at Asn205. The VWFA domain maps to 294-472 (DMVIIVDVSG…INTQEYLDVL (179 aa)). A divalent metal cation contacts are provided by Asp300, Ser302, and Ser304. An MIDAS-like motif motif is present at residues 300 to 304 (DVSGS). 6 N-linked (GlcNAc...) asparagine glycosylation sites follow: Asn389, Asn421, Asn510, Asn543, Asn627, and Asn864. Cysteines 446 and 1101 form a disulfide. Positions 488 to 577 (WTNVYEDALG…KPQTTNFREP (90 aa)) constitute a Cache domain. Residues 1117–1137 (ASFPPSLGVLVSLQLLLLLGL) traverse the membrane as a helical segment. Residues 1138–1154 (PPRPQPQVHSFAASRHL) are Cytoplasmic-facing.

This sequence belongs to the calcium channel subunit alpha-2/delta family. In terms of assembly, dimer formed of alpha-2-2 and delta-2 chains; disulfide-linked. Voltage-dependent calcium channels are multisubunit complexes, consisting of alpha-1 (CACNA1), alpha-2 (CACNA2D), beta (CACNB) and delta (CACNA2D) subunits in a 1:1:1:1 ratio. Post-translationally, N-glycosylated. In terms of processing, may be proteolytically processed into subunits alpha-2-2 and delta-2 that are disulfide-linked. It is however unclear whether such cleavage really takes place in vivo and has a functional role. According to PubMed:11306709, it is processed, at least in vitro, while according to PubMed:17052222, it is only poorly processed in vivo. In terms of tissue distribution, predominantly expressed in brain in a restricted pattern. Also expressed at lower level in kidney and testis Not expressed in lung at any moment of development. In brain, it localizes to sections of P21 brain. Expressed at high level in the cerebellum, with moderate levels in medulla, pons, and striatum. Also expressed in cortex, hippocampus, habenula and nucleus reticularis thalami (nRT). Strongly expressed in cerebellar Purkinje cells.

It localises to the membrane. Functionally, the alpha-2/delta subunit of voltage-dependent calcium channels regulates calcium current density and activation/inactivation kinetics of the calcium channel. Acts as a regulatory subunit for P/Q-type calcium channel (CACNA1A), N-type (CACNA1B), L-type (CACNA1C OR CACNA1D) and possibly T-type (CACNA1G). The protein is Voltage-dependent calcium channel subunit alpha-2/delta-2 (Cacna2d2) of Mus musculus (Mouse).